Consider the following 1907-residue polypeptide: Receptor-type tyrosine-protein phosphatase F (1907 aa).

The first 29 residues, 1–29 (MAPEPAPGRTMVPLVPALVMLGLVAGAHG), serve as a signal peptide directing secretion. The Extracellular portion of the chain corresponds to 30-1263 (DSKPVFIKVP…QQQEEPEMLW (1234 aa)). 3 consecutive Ig-like C2-type domains span residues 33-123 (PVFI…AKLS), 135-224 (PSID…ANLY), and 232-314 (PRFS…AQVT). A disulfide bridge links cysteine 54 with cysteine 107. 68-77 (KKGKKVSSQR) is a binding site for heparin. An N-linked (GlcNAc...) asparagine glycan is attached at asparagine 117. Cysteine 156 and cysteine 207 form a disulfide bridge. Residues asparagine 250 and asparagine 295 are each glycosylated (N-linked (GlcNAc...) asparagine). Cysteine 253 and cysteine 298 form a disulfide bridge. 8 consecutive Fibronectin type-III domains span residues 321–411 (PPID…TGEQ), 416–510 (PPRR…TQQG), 514–604 (QPAD…TAQS), 609–706 (PPQK…TDED), 711–819 (PPRK…TTGA), 820–914 (VPGR…PEDL), 918–1010 (FPQN…TMPV), and 1014–1098 (FAKN…TAPD). The interval 398–417 (GPPSEAVRARTGEQAPSSPP) is disordered. The segment at 693–712 (GPESSPVLVRTDEDVPSGPP) is disordered. Asparagine 721 carries an N-linked (GlcNAc...) asparagine glycan. N-linked (GlcNAc...) asparagine glycosylation occurs at asparagine 966. The helical transmembrane segment at 1264–1284 (VTGPVLAVILIILIVIAILLF) threads the bilayer. Over 1285-1907 (KRKRTHSPSS…YLGSFDHYAT (623 aa)) the chain is Cytoplasmic. The residue at position 1305 (serine 1305) is a Phosphoserine. Tyrosine-protein phosphatase domains follow at residues 1352–1607 (FSQE…LLEA) and 1639–1898 (MELE…ALEY). Residues aspartate 1516, 1548-1554 (CSAGVGR), and glutamine 1592 contribute to the substrate site. Catalysis depends on cysteine 1548, which acts as the Phosphocysteine intermediate. The active-site Phosphocysteine intermediate is cysteine 1839.

It belongs to the protein-tyrosine phosphatase family. Receptor class 2A subfamily. Interacts with GRIP1. Interacts with PPFIA1, PPFIA2 and PPFIA3. Interacts with INSR.

Its subcellular location is the membrane. It carries out the reaction O-phospho-L-tyrosyl-[protein] + H2O = L-tyrosyl-[protein] + phosphate. Functionally, possible cell adhesion receptor. It possesses an intrinsic protein tyrosine phosphatase activity (PTPase) and dephosphorylates EPHA2 regulating its activity. In terms of biological role, the first PTPase domain has enzymatic activity, while the second one seems to affect the substrate specificity of the first one. The sequence is that of Receptor-type tyrosine-protein phosphatase F (PTPRF) from Homo sapiens (Human).